The following is a 574-amino-acid chain: MVDGNYSVASNVMVPMRDGVRLAVDLYRPDADGPVPVLLVRNPYDKFDVFAWSTQSTNWLEFVRDGYAVVIQDTRGLFASEGEFVPHVDDEADAEDTLSWILEQAWCDGNVGMFGVSYLGVTQWQAAVSGVGGLKAIAPSMASADLYRAPWYGPGGALSVEALLGWSALIGTGLITSRSDARPEDAADFVQLAAILNDVAGAASVTPLAEQPLLGRLIPWVIDQVVDHPDNDESWQSISLFERLGGLATPALITAGWYDGFVGESLRTFVAVKDNADARLVVGPWSHSNLTGRNADRKFGIAATYPIQEATTMHKAFFDRHLRGETDALAGVPKVRLFVMGIDEWRDETDWPLPDTAYTPFYLGGSGAANTSTGGGTLSTSISGTESADTYLYDPADPVPSLGGTLLFHNGDNGPADQRPIHDRDDVLCYSTEVLTDPVEVTGTVSARLFVSSSAVDTDFTAKLVDVFPDGRAIALCDGIVRMRYRETLVNPTLIEAGEIYEVAIDMLATSNVFLPGHRIMVQVSSSNFPKYDRNSNTGGVIAREQLEEMCTAVNRIHRGPEHPSHIVLPIIKR.

The interval 1–144 (MVDGNYSVAS…KAIAPSMASA (144 aa)) is 1A. Tyr-44 is a binding site for substrate. Ser-117 (acyl-ester intermediate) is an active-site residue. Tyr-118 is a substrate binding site. The 2 stretch occupies residues 145 to 240 (DLYRAPWYGP…NDESWQSISL (96 aa)). The segment at 241-354 (FERLGGLATP…WRDETDWPLP (114 aa)) is 1B. Catalysis depends on charge relay system residues Asp-259 and His-287. The interval 355 to 574 (DTAYTPFYLG…SHIVLPIIKR (220 aa)) is 3.

Belongs to the CocE/NonD hydrolase family. As to quaternary structure, homodimer. The protein aggregates upon heat inactivation.

It is found in the cytoplasm. The enzyme catalyses cocaine + H2O = ecgonine methyl ester + benzoate + H(+). Its pathway is alkaloid degradation; cocaine degradation. Its function is as follows. Hydrolyzes cocaine to benzoate and ecgonine methyl ester, endowing the bacteria with the ability to utilize cocaine as a sole source of carbon and energy for growth, as this bacterium lives in the rhizosphere of coca plants. Also efficiently hydrolyzes cocaethylene, a more potent cocaine metabolite that has been observed in patients who concurrently abuse cocaine and alcohol. Is able to prevent cocaine-induced convulsions and lethality in rat. This chain is Cocaine esterase (cocE), found in Rhodococcus sp. (strain MB1 Bresler).